The following is a 402-amino-acid chain: Phosphoglycerate kinase (402 aa).

Substrate-binding positions include 29 to 31 (DFN), R45, 69 to 72 (HLGR), R125, and R158. ATP contacts are provided by residues K209, E331, and 357-360 (GGDT).

Belongs to the phosphoglycerate kinase family.

Its subcellular location is the cytoplasm. It carries out the reaction (2R)-3-phosphoglycerate + ATP = (2R)-3-phospho-glyceroyl phosphate + ADP. Its pathway is carbohydrate degradation; glycolysis; pyruvate from D-glyceraldehyde 3-phosphate: step 2/5. The sequence is that of Phosphoglycerate kinase (pgk) from Helicobacter pylori (strain ATCC 700392 / 26695) (Campylobacter pylori).